The chain runs to 294 residues: MTARIIDGKVIAADLRGQVAREVERVKRDHGLTPGLAVVLVGNDPASEVYVRSKHTQTQAAGMASFEHKLPADVAQSELLALIDKLNHDPSVHGILVQLPLPKGLETEIVINAIDPAKDVDGLHPHNAGRLSGGQPALAPCTPLGCIILSKTVHPSLEGLNAIVIGRSNLVGRPLVQLLLNENATVTIAHSRSRDLAALTARADLVYAAVGRPEMVKRDWIKPGATVIDVGINRIPTAEGKTRLVGDVAYAEVAEVAGAITPVPGGVGQMTVACLLVNTLRAACAIAGLPKPAV.

NADP(+) is bound by residues 166–168, S191, and I232; that span reads GRS.

This sequence belongs to the tetrahydrofolate dehydrogenase/cyclohydrolase family. As to quaternary structure, homodimer.

It catalyses the reaction (6R)-5,10-methylene-5,6,7,8-tetrahydrofolate + NADP(+) = (6R)-5,10-methenyltetrahydrofolate + NADPH. The enzyme catalyses (6R)-5,10-methenyltetrahydrofolate + H2O = (6R)-10-formyltetrahydrofolate + H(+). It participates in one-carbon metabolism; tetrahydrofolate interconversion. Its function is as follows. Catalyzes the oxidation of 5,10-methylenetetrahydrofolate to 5,10-methenyltetrahydrofolate and then the hydrolysis of 5,10-methenyltetrahydrofolate to 10-formyltetrahydrofolate. The protein is Bifunctional protein FolD of Bradyrhizobium sp. (strain BTAi1 / ATCC BAA-1182).